We begin with the raw amino-acid sequence, 165 residues long: MIRQVITSYFLTVCLLALVQGETVQDCENKLPTSLKSRLCEIRRYEIIEGPEMDKHIHCVMRALDFVYEDGRGDYHKLYDPLNIIELDKRHDVNLEKCIGECVQVPTSERAHVFYKCLLKSTTGRTFKKVFDLMELKQAGKVPQHQRYTAEFVQIMKDYDKALNC.

Positions 1–21 (MIRQVITSYFLTVCLLALVQG) are cleaved as a signal peptide. 3 disulfide bridges follow: C27–C59, C40–C165, and C98–C117. Residues E28 and R43 each coordinate noradrenaline. E28 serves as a coordination point for serotonin. Serotonin is bound by residues H56, Y115, D132, and E135. Histamine contacts are provided by Y115, D132, and E135. Tryptamine-binding residues include Y115, D132, and E135. Residues D132 and E135 each contribute to the noradrenaline site.

It belongs to the PBP/GOBP family. In terms of tissue distribution, female saliva (at protein level). Female salivary gland. Not detected in female carcass without salivary glands. Not detected in male tissues.

It localises to the secreted. Modulates blood feeding of female mosquitoes on vertebrate species by binding and sequestering different mediators involved in the host response. Binds serotonin, noradrenaline, histamine and tryptamine. Inhibits histamine-, serotonin- and partially noradrenaline-induced smooth muscle contraction. Exhibits vasodilating activity. The chain is Short form salivary protein D7R4 from Anopheles gambiae (African malaria mosquito).